The following is a 417-amino-acid chain: Biofilm dispersion protein BdlA (417 aa).

A PAS 1 domain is found at 1-66 (MAALDRSMAR…RRFWERLRRG (66 aa)). The PAC 1 domain occupies 67-114 (EHFSGRCKRITREGRPLWLEATYNPVRDGQGRLLKVVKYASDIDAIVH). Residues 115 to 188 (QEHEMQSKLD…ADLWRRLNRG (74 aa)) form the PAS 2 domain. The region spanning 191–241 (VTGQFRRVHRNGQPVWLEASYNPVYDADGKLYKVVKFASDVSDRMRRYQAE) is the PAC 2 domain. A Methyl-accepting transducer domain is found at 242–417 (ADNAHQAHTL…QFSRTLNADL (176 aa)).

Its function is as follows. Essential for biofilm dispersion by sensing environmental cues. May be involved in sensing and transducing signals within cells, resulting in the modulation of c-di-GMP levels, swimming motility and adhesiveness of the bacterial cell surface. The chain is Biofilm dispersion protein BdlA (bdlA) from Pseudomonas aeruginosa (strain ATCC 15692 / DSM 22644 / CIP 104116 / JCM 14847 / LMG 12228 / 1C / PRS 101 / PAO1).